A 252-amino-acid polypeptide reads, in one-letter code: Triosephosphate isomerase (252 aa).

Residue 9–11 (NWK) coordinates substrate. Histidine 98 serves as the catalytic Electrophile. Glutamate 170 serves as the catalytic Proton acceptor. 2 residues coordinate substrate: glycine 176 and serine 215.

The protein belongs to the triosephosphate isomerase family. In terms of assembly, homodimer.

Its subcellular location is the cytoplasm. It catalyses the reaction D-glyceraldehyde 3-phosphate = dihydroxyacetone phosphate. It functions in the pathway carbohydrate biosynthesis; gluconeogenesis. The protein operates within carbohydrate degradation; glycolysis; D-glyceraldehyde 3-phosphate from glycerone phosphate: step 1/1. Its function is as follows. Involved in the gluconeogenesis. Catalyzes stereospecifically the conversion of dihydroxyacetone phosphate (DHAP) to D-glyceraldehyde-3-phosphate (G3P). This Buchnera aphidicola subsp. Baizongia pistaciae (strain Bp) protein is Triosephosphate isomerase.